Reading from the N-terminus, the 445-residue chain is Tubulin beta chain (445 aa).

Residues Gln11, Glu69, Ser138, Gly142, Thr143, Gly144, Asn204, and Asn226 each contribute to the GTP site. Mg(2+) is bound at residue Glu69. The interval 426 to 445 is disordered; sequence QDATAEEEGEFEEEEGDVEA. The segment covering 429–445 has biased composition (acidic residues); sequence TAEEEGEFEEEEGDVEA.

Belongs to the tubulin family. Dimer of alpha and beta chains. A typical microtubule is a hollow water-filled tube with an outer diameter of 25 nm and an inner diameter of 15 nM. Alpha-beta heterodimers associate head-to-tail to form protofilaments running lengthwise along the microtubule wall with the beta-tubulin subunit facing the microtubule plus end conferring a structural polarity. Microtubules usually have 13 protofilaments but different protofilament numbers can be found in some organisms and specialized cells. Interacts with DCX/apicortin; the interaction stabilizes microtubule assembly. Mg(2+) serves as cofactor.

The protein resides in the cytoplasm. It localises to the cytoskeleton. In terms of biological role, tubulin is the major constituent of microtubules, a cylinder consisting of laterally associated linear protofilaments composed of alpha- and beta-tubulin heterodimers. Microtubules grow by the addition of GTP-tubulin dimers to the microtubule end, where a stabilizing cap forms. Below the cap, tubulin dimers are in GDP-bound state, owing to GTPase activity of alpha-tubulin. This Plasmodium falciparum (isolate 3D7) protein is Tubulin beta chain.